The primary structure comprises 723 residues: Transient receptor potential cation channel subfamily V member 5 (723 aa).

The Cytoplasmic portion of the chain corresponds to 1–320 (MGVKKPWIQL…SLKWKKYGQP (320 aa)). ANK repeat units lie at residues 72-101 (LGETALHVAALYDNLDAAIMLMETAPYLVT), 110-139 (VGQTALHIAIMNQNVNLVRALLARGASASA), 156-185 (YGEHPLSFAACVGSEEIVRLLIEHGADIRA), 189-222 (LGNTVLHILVLQPNKTFACQMYNLLLSHDGGDHL), and 232-261 (QGLTPFKLAGVEGNTVMFQHLMQKRKHIQW). A helical membrane pass occupies residues 321 to 341 (YFCLLGMLYIFYMICFTTCCV). Residues 342–378 (YRPLKFRDANRTHVRDNTVLEQKPLQEAYVTYQDKVR) are Extracellular-facing. Asparagine 351 is a glycosylation site (N-linked (GlcNAc...) asparagine). Residues 379 to 401 (LVGELVTVIGAVVILLIEIPDIF) form a helical membrane-spanning segment. Over 402–412 (RVGASRYFGHT) the chain is Cytoplasmic. Residues 413–435 (VLGGPFHVIIITYASLVLLIMVM) form a helical membrane-spanning segment. Residues 436 to 441 (RLTSMN) lie on the Extracellular side of the membrane. The chain crosses the membrane as a helical span at residues 442-462 (GEVVPISMALVLGWCSVMYFS). The Cytoplasmic segment spans residues 463–485 (RGFQMLGPFTIMIQKMIFGDLLR). A helical transmembrane segment spans residues 486 to 506 (FCWLMAMVILGFASAFYIIFQ). An intramembrane region (pore-forming) is located at residues 517–537 (SDYPTAMFSTFELFLTIIDGP). Aspartate 535 provides a ligand contact to Ca(2+). The chain crosses the membrane as a helical span at residues 550 to 570 (LTYFAFAIIATLLMLNLFIAM). The Cytoplasmic segment spans residues 571 to 723 (MGDTHWRVAQ…EGDGEEIYHF (153 aa)). The segment at 591–595 (VATTV) is interaction with S100A10. Residues 643–646 (AFKS) form an involved in Ca(2+)-dependent inactivation region. The disordered stretch occupies residues 651–674 (EVQEQLSEKQPSGTETGTLARGSV). Polar residues predominate over residues 654–667 (EQLSEKQPSGTETG). Threonine 678 bears the Phosphothreonine mark. Serine 682 is modified (phosphoserine). The segment at 693-723 (RGWEILRRNTLGHLNLGQDLGEGDGEEIYHF) is involved in Ca(2+)-dependent inactivation.

This sequence belongs to the transient receptor (TC 1.A.4) family. TrpV subfamily. TRPV5 sub-subfamily. As to quaternary structure, homotetramer and probably heterotetramer with TRPV6. Interacts with TRPV6. Interacts with S100A10 and probably with the ANAX2-S100A10 heterotetramer. The interaction with S100A10 is required for the trafficking to the plasma membrane. Interacts with calmodulin. Interacts with BSPRY, which results in its inactivation. Post-translationally, glycosylated. As to expression, detected in kidney (at protein level). Detected in kidney.

The protein localises to the cell membrane. It localises to the apical cell membrane. It carries out the reaction Ca(2+)(in) = Ca(2+)(out). Its activity is regulated as follows. Activated by WNK3. Its function is as follows. Constitutively active calcium selective cation channel thought to be involved in Ca(2+) reabsorption in kidney and intestine. Required for normal Ca(2+) reabsorption in the kidney distal convoluted tubules. The channel is activated by low internal calcium level and the current exhibits an inward rectification. A Ca(2+)-dependent feedback regulation includes fast channel inactivation and slow current decay. Heteromeric assembly with TRPV6 seems to modify channel properties. TRPV5-TRPV6 heteromultimeric concatemers exhibit voltage-dependent gating. This chain is Transient receptor potential cation channel subfamily V member 5 (Trpv5), found in Rattus norvegicus (Rat).